Here is a 412-residue protein sequence, read N- to C-terminus: Putative competence-damage inducible protein (412 aa).

Belongs to the CinA family.

The sequence is that of Putative competence-damage inducible protein from Clostridium perfringens (strain SM101 / Type A).